The chain runs to 103 residues: Large ribosomal subunit protein bL21 (103 aa).

This sequence belongs to the bacterial ribosomal protein bL21 family. Part of the 50S ribosomal subunit. Contacts protein L20.

Functionally, this protein binds to 23S rRNA in the presence of protein L20. This Borreliella burgdorferi (strain ZS7) (Borrelia burgdorferi) protein is Large ribosomal subunit protein bL21.